A 249-amino-acid polypeptide reads, in one-letter code: Triosephosphate isomerase (249 aa).

11 to 13 contributes to the substrate binding site; the sequence is NWK. His-91 functions as the Electrophile in the catalytic mechanism. Glu-163 serves as the catalytic Proton acceptor. Substrate-binding positions include Gly-169, Ser-208, and 229 to 230; that span reads GG.

This sequence belongs to the triosephosphate isomerase family. As to quaternary structure, homodimer.

The protein resides in the cytoplasm. It catalyses the reaction D-glyceraldehyde 3-phosphate = dihydroxyacetone phosphate. It participates in carbohydrate biosynthesis; gluconeogenesis. It functions in the pathway carbohydrate degradation; glycolysis; D-glyceraldehyde 3-phosphate from glycerone phosphate: step 1/1. Involved in the gluconeogenesis. Catalyzes stereospecifically the conversion of dihydroxyacetone phosphate (DHAP) to D-glyceraldehyde-3-phosphate (G3P). The polypeptide is Triosephosphate isomerase (Pseudoalteromonas translucida (strain TAC 125)).